The following is a 1064-amino-acid chain: Alpha-aminoadipic semialdehyde synthase (1064 aa).

The interval 24-445 (VNKWERRTPL…RACISYRGEL (422 aa)) is lysine-ketoglutarate reductase. Thr238 is subject to Phosphothreonine. Phosphoserine is present on Ser458. The saccharopine dehydrogenase stretch occupies residues 583–1064 (MTKKSGVLIL…YGIKLMEKAE (482 aa)). L-saccharopine is bound by residues 703–704 (SY), Asp730, Arg830, and 852–854 (TLR). 729-731 (LDP) provides a ligand contact to NADP(+).

In the N-terminal section; belongs to the AlaDH/PNT family. It in the C-terminal section; belongs to the saccharopine dehydrogenase family. In terms of assembly, homodimer. Post-translationally, phosphorylation of Ser-458 seems important for the LKR activity. As to expression, ubiquitous, with higher levels in flowers. Isoform Long is mostly present in young leaves, cotyledons, root tips and mature root parts. Whereas isoform Short is mostly expressed in cotyledons and at low levels in all root parts.

The protein localises to the cytoplasm. It catalyses the reaction L-saccharopine + NADP(+) + H2O = L-lysine + 2-oxoglutarate + NADPH + H(+). It carries out the reaction L-saccharopine + NAD(+) + H2O = (S)-2-amino-6-oxohexanoate + L-glutamate + NADH + H(+). The protein operates within amino-acid degradation; L-lysine degradation via saccharopine pathway; glutaryl-CoA from L-lysine: step 1/6. It functions in the pathway amino-acid degradation; L-lysine degradation via saccharopine pathway; glutaryl-CoA from L-lysine: step 2/6. The LKR activity is stimulated by NaCl. Functionally, bifunctional enzyme that catalyzes the first two steps in lysine degradation. The N-terminal and the C-terminal contain lysine-oxoglutarate reductase and saccharopine dehydrogenase activity, respectively. Negatively regulates free Lys accumulation in seeds. This is Alpha-aminoadipic semialdehyde synthase (LKR/SDH) from Arabidopsis thaliana (Mouse-ear cress).